The following is a 546-amino-acid chain: Chaperonin GroEL (546 aa).

ATP-binding positions include 30 to 33 (TLGP), K51, 87 to 91 (DGTTT), G415, 479 to 481 (NAA), and D495. A disordered region spans residues 526–546 (KKGDSAPAGGGMGDMGGMGMM). The segment covering 533-546 (AGGGMGDMGGMGMM) has biased composition (gly residues).

It belongs to the chaperonin (HSP60) family. In terms of assembly, forms a cylinder of 14 subunits composed of two heptameric rings stacked back-to-back. Interacts with the co-chaperonin GroES.

The protein resides in the cytoplasm. The enzyme catalyses ATP + H2O + a folded polypeptide = ADP + phosphate + an unfolded polypeptide.. Together with its co-chaperonin GroES, plays an essential role in assisting protein folding. The GroEL-GroES system forms a nano-cage that allows encapsulation of the non-native substrate proteins and provides a physical environment optimized to promote and accelerate protein folding. This Thioalkalivibrio sulfidiphilus (strain HL-EbGR7) protein is Chaperonin GroEL.